The primary structure comprises 111 residues: Protein YibV (111 aa).

The protein is Protein YibV (yibV) of Escherichia coli O157:H7.